The chain runs to 211 residues: Probable septum site-determining protein MinC (211 aa).

This sequence belongs to the MinC family. As to quaternary structure, interacts with MinD and FtsZ.

Cell division inhibitor that blocks the formation of polar Z ring septums. Rapidly oscillates between the poles of the cell to destabilize FtsZ filaments that have formed before they mature into polar Z rings. Prevents FtsZ polymerization. This is Probable septum site-determining protein MinC from Clostridium perfringens (strain 13 / Type A).